A 701-amino-acid polypeptide reads, in one-letter code: Elongation factor G (701 aa).

The 277-residue stretch at 10–286 (NKVRNIGIMA…AVIDYLPSPL (277 aa)) folds into the tr-type G domain. Residues 19 to 26 (AHIDAGKT), 83 to 87 (DTPGH), and 137 to 140 (NKMD) each bind GTP.

This sequence belongs to the TRAFAC class translation factor GTPase superfamily. Classic translation factor GTPase family. EF-G/EF-2 subfamily.

Its subcellular location is the cytoplasm. Its function is as follows. Catalyzes the GTP-dependent ribosomal translocation step during translation elongation. During this step, the ribosome changes from the pre-translocational (PRE) to the post-translocational (POST) state as the newly formed A-site-bound peptidyl-tRNA and P-site-bound deacylated tRNA move to the P and E sites, respectively. Catalyzes the coordinated movement of the two tRNA molecules, the mRNA and conformational changes in the ribosome. This chain is Elongation factor G, found in Mycobacteroides abscessus (strain ATCC 19977 / DSM 44196 / CCUG 20993 / CIP 104536 / JCM 13569 / NCTC 13031 / TMC 1543 / L948) (Mycobacterium abscessus).